The chain runs to 294 residues: MLSSMARIAIIGGGSIGEALLSGLLRAGRQVKDLVVAERMPDRARYLADTYSVLVTSVTDAVENAMFVVVAVKPTDVESVMGDLVQAAAVANDSAEQVLVTVAAGVTITYLESKLPAGTPVVRAMPNAAALVGAGVTVLAKGRFVTGQQFEDVLAMFDAVGGVLTVPESQMDAVTAVSGSGPAYFFLLVEALVDAGVAVGLTRQVATELAAQTMAGSAAMLLERMDQDRHSAEVAPLGAQVDVPAAQLRATITSPGGTTAAALRELERGGLRMVVDAAVQAAKIRSEQLRITSE.

This sequence belongs to the pyrroline-5-carboxylate reductase family.

Its subcellular location is the cytoplasm. The catalysed reaction is L-proline + NADP(+) = (S)-1-pyrroline-5-carboxylate + NADPH + 2 H(+). It catalyses the reaction L-proline + NAD(+) = (S)-1-pyrroline-5-carboxylate + NADH + 2 H(+). Its pathway is amino-acid biosynthesis; L-proline biosynthesis; L-proline from L-glutamate 5-semialdehyde: step 1/1. Its function is as follows. Catalyzes the reduction of 1-pyrroline-5-carboxylate (PCA) to L-proline. This chain is Pyrroline-5-carboxylate reductase, found in Mycobacterium leprae (strain TN).